The primary structure comprises 966 residues: DNA mismatch repair protein MutS (966 aa).

ATP is bound at residue 709-716 (GPNMAGKS). The segment at 894–914 (EGQRPPSSPAQPPAPPAPVVV) is disordered. Positions 899–912 (PSSPAQPPAPPAPV) are enriched in pro residues.

This sequence belongs to the DNA mismatch repair MutS family.

Functionally, this protein is involved in the repair of mismatches in DNA. It is possible that it carries out the mismatch recognition step. This protein has a weak ATPase activity. The protein is DNA mismatch repair protein MutS of Chloroflexus aurantiacus (strain ATCC 29366 / DSM 635 / J-10-fl).